Here is a 525-residue protein sequence, read N- to C-terminus: Peptide chain release factor 3 (525 aa).

A tr-type G domain is found at 11–279; it reads NKRRTFAIIS…TYLQFAPAPS (269 aa). Residues 20–27, 88–92, and 142–145 each bind GTP; these read SHPDAGKT, DTPGH, and NKFD.

Belongs to the TRAFAC class translation factor GTPase superfamily. Classic translation factor GTPase family. PrfC subfamily.

The protein localises to the cytoplasm. In terms of biological role, increases the formation of ribosomal termination complexes and stimulates activities of RF-1 and RF-2. It binds guanine nucleotides and has strong preference for UGA stop codons. It may interact directly with the ribosome. The stimulation of RF-1 and RF-2 is significantly reduced by GTP and GDP, but not by GMP. The polypeptide is Peptide chain release factor 3 (Limosilactobacillus reuteri (strain DSM 20016) (Lactobacillus reuteri)).